We begin with the raw amino-acid sequence, 80 residues long: Clavanin-E (80 aa).

A signal peptide spans 1–19 (MKTTILILLILGLGINAKS). The propeptide occupies 20–29 (LEERKSEEEK). At phenylalanine 52 the chain carries Phenylalanine amide. Positions 54 to 80 (DDQQDNGKFYGYYAEDNGKHWYDTGDQ) are excised as a propeptide.

The protein resides in the secreted. Has antimicrobial activity. This chain is Clavanin-E, found in Styela clava (Sea squirt).